The primary structure comprises 472 residues: Sulfate adenylyltransferase subunit 1 (472 aa).

A tr-type G domain is found at 22–239; that stretch reads KELLRFLTCG…TVPIAGDKNY (218 aa). Residues 31–38 form a G1 region; sequence GSVDDGKS. 31–38 lines the GTP pocket; that stretch reads GSVDDGKS. Residues 89-93 are G2; sequence GITID. Residues 110 to 113 form a G3 region; that stretch reads DTPG. GTP contacts are provided by residues 110–114 and 165–168; these read DTPGH and NKMD. Residues 165-168 form a G4 region; sequence NKMD. The tract at residues 202–204 is G5; it reads SAL.

The protein belongs to the TRAFAC class translation factor GTPase superfamily. Classic translation factor GTPase family. CysN/NodQ subfamily. In terms of assembly, heterodimer composed of CysD, the smaller subunit, and CysN.

The catalysed reaction is sulfate + ATP + H(+) = adenosine 5'-phosphosulfate + diphosphate. The protein operates within sulfur metabolism; hydrogen sulfide biosynthesis; sulfite from sulfate: step 1/3. Its function is as follows. With CysD forms the ATP sulfurylase (ATPS) that catalyzes the adenylation of sulfate producing adenosine 5'-phosphosulfate (APS) and diphosphate, the first enzymatic step in sulfur assimilation pathway. APS synthesis involves the formation of a high-energy phosphoric-sulfuric acid anhydride bond driven by GTP hydrolysis by CysN coupled to ATP hydrolysis by CysD. The chain is Sulfate adenylyltransferase subunit 1 from Cellvibrio japonicus (strain Ueda107) (Pseudomonas fluorescens subsp. cellulosa).